Here is a 585-residue protein sequence, read N- to C-terminus: Bifunctional purine biosynthesis protein ade10 (585 aa).

The MGS-like domain maps to 1 to 142 (MYALLSVYDK…KNHARVTILS (142 aa)). IMP-binding positions include 30–33 (SGGT), 60–63 (RVKT), 97–98 (CN), and 121–122 (DI). The active-site Proton donor/acceptor; for FAICAR cyclization activity is the K133. 5-amino-1-(5-phospho-beta-D-ribosyl)imidazole-4-carboxamide is bound by residues 200–201 (RY), H260, G308, D331, N423, and R443. The active-site Proton acceptor; for AICAR formyltransferase activity is H260. A (6R)-10-formyltetrahydrofolate-binding site is contributed by I444. F534 contacts 5-amino-1-(5-phospho-beta-D-ribosyl)imidazole-4-carboxamide. (6R)-10-formyltetrahydrofolate-binding positions include D539 and 558-559 (SV). R581 is a binding site for 5-amino-1-(5-phospho-beta-D-ribosyl)imidazole-4-carboxamide.

It belongs to the PurH family. As to quaternary structure, homodimer.

It is found in the cytoplasm. Its subcellular location is the cytosol. It carries out the reaction (6R)-10-formyltetrahydrofolate + 5-amino-1-(5-phospho-beta-D-ribosyl)imidazole-4-carboxamide = 5-formamido-1-(5-phospho-D-ribosyl)imidazole-4-carboxamide + (6S)-5,6,7,8-tetrahydrofolate. The catalysed reaction is IMP + H2O = 5-formamido-1-(5-phospho-D-ribosyl)imidazole-4-carboxamide. It participates in purine metabolism; IMP biosynthesis via de novo pathway; 5-formamido-1-(5-phospho-D-ribosyl)imidazole-4-carboxamide from 5-amino-1-(5-phospho-D-ribosyl)imidazole-4-carboxamide (10-formyl THF route): step 1/1. The protein operates within purine metabolism; IMP biosynthesis via de novo pathway; IMP from 5-formamido-1-(5-phospho-D-ribosyl)imidazole-4-carboxamide: step 1/1. Functionally, bifunctional enzyme that catalyzes the last two steps of purine biosynthesis. Acts as a transformylase that incorporates a formyl group to the AMP analog AICAR (5-amino-1-(5-phospho-beta-D-ribosyl)imidazole-4-carboxamide) to produce the intermediate formyl-AICAR (FAICAR). Also catalyzes the cyclization of FAICAR to IMP. In Schizosaccharomyces pombe (strain 972 / ATCC 24843) (Fission yeast), this protein is Bifunctional purine biosynthesis protein ade10 (ade10).